Here is a 197-residue protein sequence, read N- to C-terminus: Lymphotoxin-alpha (197 aa).

A signal peptide spans 1 to 26 (MTPPGRLYLPLLLGLLLAPPPPGAQG). The 143-residue stretch at 55–197 (PAAHLVGDPS…SSVFFGAFAL (143 aa)) folds into the THD domain. A glycan (N-linked (GlcNAc...) asparagine) is linked at N88. The cysteines at positions 112 and 148 are disulfide-linked.

The protein belongs to the tumor necrosis factor family. In terms of assembly, homotrimer, and heterotrimer of either two LTB and one LTA subunits or (less prevalent) two LTA and one LTB subunits. Interacts with TNFRSF14.

It is found in the secreted. The protein localises to the membrane. Cytokine that in its homotrimeric form binds to TNFRSF1A/TNFR1, TNFRSF1B/TNFBR and TNFRSF14/HVEM. In its heterotrimeric form with LTB binds to TNFRSF3/LTBR. Lymphotoxin is produced by lymphocytes and is cytotoxic for a wide range of tumor cells in vitro and in vivo. This chain is Lymphotoxin-alpha (LTA), found in Oryctolagus cuniculus (Rabbit).